Reading from the N-terminus, the 144-residue chain is Transcriptional regulator SlyA (144 aa).

Residues 2-135 (ESPLGSDLAR…LNKIISKLEK (134 aa)) enclose the HTH marR-type domain. A DNA-binding region (H-T-H motif) is located at residues 49-72 (QIQLAKAIGIEQPSLVRTLDQLEE).

The protein belongs to the SlyA family. Homodimer.

In terms of biological role, transcription regulator that can specifically activate or repress expression of target genes. This is Transcriptional regulator SlyA from Blochmanniella pennsylvanica (strain BPEN).